Here is a 148-residue protein sequence, read N- to C-terminus: 3-dehydroquinate dehydratase (148 aa).

Tyr-23 (proton acceptor) is an active-site residue. 3 residues coordinate substrate: Asn-75, His-81, and Asp-88. His-101 acts as the Proton donor in catalysis. Substrate-binding positions include 102–103 and Arg-112; that span reads LS.

Belongs to the type-II 3-dehydroquinase family. In terms of assembly, homododecamer.

It carries out the reaction 3-dehydroquinate = 3-dehydroshikimate + H2O. The protein operates within metabolic intermediate biosynthesis; chorismate biosynthesis; chorismate from D-erythrose 4-phosphate and phosphoenolpyruvate: step 3/7. Catalyzes a trans-dehydration via an enolate intermediate. The sequence is that of 3-dehydroquinate dehydratase from Cellvibrio japonicus (strain Ueda107) (Pseudomonas fluorescens subsp. cellulosa).